The chain runs to 109 residues: Flagellar hook-basal body complex protein FliE (109 aa).

It belongs to the FliE family.

The protein localises to the bacterial flagellum basal body. This Pseudomonas paraeruginosa (strain DSM 24068 / PA7) (Pseudomonas aeruginosa (strain PA7)) protein is Flagellar hook-basal body complex protein FliE.